The sequence spans 116 residues: Small ribosomal subunit protein uS13m (116 aa).

It belongs to the universal ribosomal protein uS13 family. In terms of assembly, part of the small ribosomal subunit.

It is found in the mitochondrion. Located at the top of the head of the small subunit, it contacts several helices of the 18S rRNA. The polypeptide is Small ribosomal subunit protein uS13m (RPS13) (Nicotiana tabacum (Common tobacco)).